The chain runs to 505 residues: ATP synthase subunit alpha, chloroplastic (505 aa).

An ATP-binding site is contributed by 170–177 (GDRQTGKT).

This sequence belongs to the ATPase alpha/beta chains family. In terms of assembly, F-type ATPases have 2 components, CF(1) - the catalytic core - and CF(0) - the membrane proton channel. CF(1) has five subunits: alpha(3), beta(3), gamma(1), delta(1), epsilon(1). CF(0) has four main subunits: a, b, b' and c.

It is found in the plastid. The protein localises to the chloroplast thylakoid membrane. The catalysed reaction is ATP + H2O + 4 H(+)(in) = ADP + phosphate + 5 H(+)(out). Produces ATP from ADP in the presence of a proton gradient across the membrane. The alpha chain is a regulatory subunit. The chain is ATP synthase subunit alpha, chloroplastic from Phaeodactylum tricornutum (strain CCAP 1055/1).